We begin with the raw amino-acid sequence, 137 residues long: Glutaredoxin-C9 (137 aa).

Residues 32 to 136 (GERVRMVVEE…PILKEVGALW (105 aa)) enclose the Glutaredoxin domain. An intrachain disulfide couples Cys-52 to Cys-55. The Responsive for interaction with TGA factors motif lies at 134–137 (ALWL).

Belongs to the glutaredoxin family. CC-type subfamily. As to quaternary structure, interacts with TGA2 and TGA6.

The protein resides in the cytoplasm. It localises to the nucleus. Its function is as follows. Has a glutathione-disulfide oxidoreductase activity in the presence of NADPH and glutathione reductase. Reduces low molecular weight disulfides and proteins. This chain is Glutaredoxin-C9 (GRXC9), found in Arabidopsis thaliana (Mouse-ear cress).